A 514-amino-acid chain; its full sequence is MSVSKKPMVLVILDGYGYREEQQDNAILNAKTPVMDALWAKRPHTLIDASGLEVGLPDRQMGNSEVGHVNLGAGRIVYQDLTRLDVEIKERTFFANPVLTNAVDQAKNAGKAVHIMGLLSAGGVHSHEDHIMAMVELAAERGAEKIYLHAFLDGRDTPPRSAEASLKKFEDKFAAQGKGRVASIVGRYYAMDRDNRWDRVEKAYDLMTLAQGEFQADTAVAGLQAAYARDENDEFVKATVIRAEGQADAAMEDGDTLIFMNFRADRAREITRAFVNADFDGFARKKVVNLNFVMLTEYAADIKTTVAYPPASLANTFGEWMAKNDKTQLRISETEKYAHVTFFFNGGVEEPFAGEERILINSPKVATYDLQPEMSSAELTEKLVAAIESGKYDTIICNYPNGDMVGHTGVMEAAIKAVEALDNCIDQVTKAVESVGGQLLITADHGNAEQMRDPATGQAHTAHTNLPVPLIYVGEKNVKAVEGGKLSDIAPTMLSLMGMEIPQEMTGKPLFIVE.

Residues Asp-14 and Ser-64 each contribute to the Mn(2+) site. Catalysis depends on Ser-64, which acts as the Phosphoserine intermediate. Substrate is bound by residues His-125, 155 to 156, Arg-187, Arg-193, 263 to 266, and Lys-336; these read RD and RADR. Mn(2+)-binding residues include Asp-403, His-407, Asp-444, His-445, and His-463.

Belongs to the BPG-independent phosphoglycerate mutase family. Monomer. Mn(2+) serves as cofactor.

It catalyses the reaction (2R)-2-phosphoglycerate = (2R)-3-phosphoglycerate. Its pathway is carbohydrate degradation; glycolysis; pyruvate from D-glyceraldehyde 3-phosphate: step 3/5. Its function is as follows. Catalyzes the interconversion of 2-phosphoglycerate and 3-phosphoglycerate. The sequence is that of 2,3-bisphosphoglycerate-independent phosphoglycerate mutase from Salmonella choleraesuis (strain SC-B67).